A 205-amino-acid chain; its full sequence is GTP cyclohydrolase 1 (205 aa).

Positions 93, 96, and 166 each coordinate Zn(2+).

Belongs to the GTP cyclohydrolase I family. As to quaternary structure, homomer.

It carries out the reaction GTP + H2O = 7,8-dihydroneopterin 3'-triphosphate + formate + H(+). It participates in cofactor biosynthesis; 7,8-dihydroneopterin triphosphate biosynthesis; 7,8-dihydroneopterin triphosphate from GTP: step 1/1. This chain is GTP cyclohydrolase 1, found in Mycobacterium leprae (strain Br4923).